A 348-amino-acid chain; its full sequence is Uroporphyrinogen decarboxylase (348 aa).

Substrate is bound by residues 28-32 (RQAGR), aspartate 78, tyrosine 154, threonine 209, and histidine 325.

The protein belongs to the uroporphyrinogen decarboxylase family. Homodimer.

It is found in the cytoplasm. The catalysed reaction is uroporphyrinogen III + 4 H(+) = coproporphyrinogen III + 4 CO2. It participates in porphyrin-containing compound metabolism; protoporphyrin-IX biosynthesis; coproporphyrinogen-III from 5-aminolevulinate: step 4/4. Functionally, catalyzes the decarboxylation of four acetate groups of uroporphyrinogen-III to yield coproporphyrinogen-III. The chain is Uroporphyrinogen decarboxylase from Rhodopseudomonas palustris (strain BisB5).